A 91-amino-acid chain; its full sequence is UPF0250 protein PP_4802 (91 aa).

The protein belongs to the UPF0250 family.

The chain is UPF0250 protein PP_4802 from Pseudomonas putida (strain ATCC 47054 / DSM 6125 / CFBP 8728 / NCIMB 11950 / KT2440).